The sequence spans 275 residues: Structure-specific endonuclease subunit SLX1 (275 aa).

In terms of domain architecture, GIY-YIG spans R12–A95. A compositionally biased stretch (pro residues) spans H148–P161. The segment at H148 to Q179 is disordered. An SLX1-type zinc finger spans residues C186–C238.

Belongs to the SLX1 family. Forms a heterodimer with SLX4. Requires a divalent metal cation as cofactor.

The protein localises to the nucleus. Its function is as follows. Catalytic subunit of the SLX1-SLX4 structure-specific endonuclease that resolves DNA secondary structures generated during DNA repair and recombination. Has endonuclease activity towards branched DNA substrates, introducing single-strand cuts in duplex DNA close to junctions with ss-DNA. Has a preference for 5'-flap structures, and promotes symmetrical cleavage of static and migrating Holliday junctions (HJs). Resolves HJs by generating two pairs of ligatable, nicked duplex products. This chain is Structure-specific endonuclease subunit SLX1, found in Homo sapiens (Human).